We begin with the raw amino-acid sequence, 612 residues long: T-cell immunomodulatory protein (612 aa).

Residues 1–33 (MAAAGRLPSSWALFSPLLAGLALLGVGPVPARA) form the signal peptide. 9 N-linked (GlcNAc...) asparagine glycosylation sites follow: asparagine 36, asparagine 95, asparagine 139, asparagine 146, asparagine 151, asparagine 176, asparagine 188, asparagine 226, and asparagine 243. Residues 258–293 (VVGQSAFADFDGDGHMDHLLPGCEDKNCQKSTIYLV) form an FG-GAP; atypical repeat. N-linked (GlcNAc...) asparagine glycans are attached at residues asparagine 353, asparagine 371, and asparagine 482. The chain crosses the membrane as a helical span at residues 567 to 587 (VLLTAIALIGVCVFILAIIGI).

It belongs to the TIP family. In terms of assembly, interacts with RUVBL1, RUVBL2 and alpha-tubulin. As to expression, ubiquitously expressed.

The protein resides in the secreted. It localises to the membrane. Functionally, modulator of T-cell function. Has a protective effect in graft versus host disease model. The polypeptide is T-cell immunomodulatory protein (Homo sapiens (Human)).